The sequence spans 292 residues: NAD kinase (292 aa).

Catalysis depends on Asp73, which acts as the Proton acceptor. NAD(+) is bound by residues 73–74 (DG), 147–148 (NE), His158, Arg175, Asp177, 188–193 (TAYSLS), and Gln247.

This sequence belongs to the NAD kinase family. A divalent metal cation is required as a cofactor.

Its subcellular location is the cytoplasm. The enzyme catalyses NAD(+) + ATP = ADP + NADP(+) + H(+). Involved in the regulation of the intracellular balance of NAD and NADP, and is a key enzyme in the biosynthesis of NADP. Catalyzes specifically the phosphorylation on 2'-hydroxyl of the adenosine moiety of NAD to yield NADP. This Sodalis glossinidius (strain morsitans) protein is NAD kinase.